The following is a 132-amino-acid chain: ATP synthase epsilon chain (132 aa).

This sequence belongs to the ATPase epsilon chain family. As to quaternary structure, F-type ATPases have 2 components, CF(1) - the catalytic core - and CF(0) - the membrane proton channel. CF(1) has five subunits: alpha(3), beta(3), gamma(1), delta(1), epsilon(1). CF(0) has three main subunits: a, b and c.

The protein resides in the cell inner membrane. Produces ATP from ADP in the presence of a proton gradient across the membrane. The chain is ATP synthase epsilon chain from Anaeromyxobacter dehalogenans (strain 2CP-1 / ATCC BAA-258).